A 318-amino-acid chain; its full sequence is Ferrochelatase (318 aa).

Positions 186 and 264 each coordinate Fe cation.

It belongs to the ferrochelatase family.

It localises to the cytoplasm. The enzyme catalyses heme b + 2 H(+) = protoporphyrin IX + Fe(2+). It functions in the pathway porphyrin-containing compound metabolism; protoheme biosynthesis; protoheme from protoporphyrin-IX: step 1/1. Catalyzes the ferrous insertion into protoporphyrin IX. This Chlamydia caviae (strain ATCC VR-813 / DSM 19441 / 03DC25 / GPIC) (Chlamydophila caviae) protein is Ferrochelatase.